The sequence spans 590 residues: Laccase-19 (590 aa).

Residues 1–28 (MEKLSMVTSLLCAITVAVLAVAVVSGEA) form the signal peptide. Plastocyanin-like domains follow at residues 36–152 (VVHE…PRDG) and 161–315 (KDVP…YAGT). N-linked (GlcNAc...) asparagine glycans are attached at residues Asn41 and Asn47. Residues His86 and His88 each contribute to the Cu cation site. A glycan (N-linked (GlcNAc...) asparagine) is linked at Asn120. The Cu cation site is built by His131 and His133. Asn205, Asn344, Asn378, Asn397, Asn434, and Asn465 each carry an N-linked (GlcNAc...) asparagine glycan. Residues 424–566 (DFPIRPPRPF…ATAFIVEDGP (143 aa)) form the Plastocyanin-like 3 domain. Positions 483, 486, 488, 545, 546, 547, 551, and 556 each coordinate Cu cation. The disordered stretch occupies residues 565-590 (GPTPETSLPPPPPEFKRCGNNGLSQP).

This sequence belongs to the multicopper oxidase family. Requires Cu cation as cofactor.

It localises to the secreted. The protein localises to the extracellular space. It is found in the apoplast. It catalyses the reaction 4 hydroquinone + O2 = 4 benzosemiquinone + 2 H2O. In terms of biological role, lignin degradation and detoxification of lignin-derived products. The protein is Laccase-19 (LAC19) of Oryza sativa subsp. japonica (Rice).